Consider the following 346-residue polypeptide: Ion-translocating oxidoreductase complex subunit D (346 aa).

Transmembrane regions (helical) follow at residues 20–40 (IMIQ…TFFG), 42–62 (GIII…GVVL), 69–91 (LASR…SLPP), and 120–140 (PFNP…VQMT). Position 187 is an FMN phosphoryl threonine (Thr187). 5 consecutive transmembrane segments (helical) span residues 212 to 232 (ASAG…YLIW), 242 to 262 (LSLL…APVV), 264 to 284 (APPL…FIAT), 290 to 310 (AATV…VWLI), and 314 to 334 (GGYP…VPLI).

Belongs to the NqrB/RnfD family. As to quaternary structure, the complex is composed of six subunits: RnfA, RnfB, RnfC, RnfD, RnfE and RnfG. It depends on FMN as a cofactor.

The protein localises to the cell inner membrane. Its function is as follows. Part of a membrane-bound complex that couples electron transfer with translocation of ions across the membrane. This Sodalis glossinidius (strain morsitans) protein is Ion-translocating oxidoreductase complex subunit D.